A 458-amino-acid polypeptide reads, in one-letter code: Fasciclin-like arabinogalactan protein 17 (458 aa).

An N-terminal signal peptide occupies residues 1 to 30; that stretch reads MDRRIYGGSAVIHLFLFFSVLIFSAASALS. One can recognise an FAS1 1 domain in the interval 43–184; it reads NSNSVLVALL…GLIHGIERLL (142 aa). Residue N80 is glycosylated (N-linked (GlcNAc...) asparagine). Residues 207–262 are disordered; the sequence is PEGAPEVDPRTNRLKKPAAPVPAGSPPALPIQSAMAPGPSLAPAPAPGPGGKQHHF. A compositionally biased stretch (pro residues) spans 225-235; it reads APVPAGSPPAL. Residues 268 to 411 form the FAS1 2 domain; that stretch reads VKDFIHTLLH…ISVQGIDGVL (144 aa). N-linked (GlcNAc...) asparagine glycosylation occurs at N290.

It belongs to the fasciclin-like AGP family.

It localises to the secreted. Functionally, may be a cell surface adhesion protein. The polypeptide is Fasciclin-like arabinogalactan protein 17 (FLA17) (Arabidopsis thaliana (Mouse-ear cress)).